Consider the following 152-residue polypeptide: SKP1-like protein 12 (152 aa).

The interval 94–152 (ILAANYLNIKSLFDLTCQTVADMIKGKTPEEIRSTFNIENDFTPEEEEAVRKENQWAFE) is interaction with the F-box domain of F-box proteins.

It belongs to the SKP1 family. In terms of assembly, part of a SCF (SKP1-cullin-F-box) protein ligase complex. Interacts with ADO3/FKF1, COI1/FBL2, EBF1/FBL6, PP2B10, At3g61590 and At5g49610. As to expression, expressed in young seedlings, roots, leaves, floral stems, inflorescences, and siliques, with a slightly higher level in inflorescence than in other tissues.

The protein resides in the nucleus. It functions in the pathway protein modification; protein ubiquitination. Involved in ubiquitination and subsequent proteasomal degradation of target proteins. Together with CUL1, RBX1 and a F-box protein, it forms a SCF E3 ubiquitin ligase complex. The functional specificity of this complex depends on the type of F-box protein. In the SCF complex, it serves as an adapter that links the F-box protein to CUL1. Plays a role during early flowers reproductive development. The chain is SKP1-like protein 12 (ASK12) from Arabidopsis thaliana (Mouse-ear cress).